A 201-amino-acid polypeptide reads, in one-letter code: 3-isopropylmalate dehydratase small subunit (201 aa).

This sequence belongs to the LeuD family. LeuD type 1 subfamily. Heterodimer of LeuC and LeuD.

The catalysed reaction is (2R,3S)-3-isopropylmalate = (2S)-2-isopropylmalate. The protein operates within amino-acid biosynthesis; L-leucine biosynthesis; L-leucine from 3-methyl-2-oxobutanoate: step 2/4. In terms of biological role, catalyzes the isomerization between 2-isopropylmalate and 3-isopropylmalate, via the formation of 2-isopropylmaleate. The chain is 3-isopropylmalate dehydratase small subunit from Brucella abortus (strain S19).